The primary structure comprises 1489 residues: DNA-directed RNA polymerase subunit beta (1489 aa).

Belongs to the RNA polymerase beta chain family. As to quaternary structure, the RNAP catalytic core consists of 2 alpha, 1 beta, 1 beta' and 1 omega subunit. When a sigma factor is associated with the core the holoenzyme is formed, which can initiate transcription.

The catalysed reaction is RNA(n) + a ribonucleoside 5'-triphosphate = RNA(n+1) + diphosphate. Functionally, DNA-dependent RNA polymerase catalyzes the transcription of DNA into RNA using the four ribonucleoside triphosphates as substrates. In Koribacter versatilis (strain Ellin345), this protein is DNA-directed RNA polymerase subunit beta.